The chain runs to 102 residues: uncharacterized protein (102 aa).

The segment at 1–43 (MNNAHEENISSVTGFKSTSGSPAIGSSLPGRSGEGRSSSSSSG) is disordered. Positions 9 to 21 (ISSVTGFKSTSGS) are enriched in polar residues. Residues 25-43 (GSSLPGRSGEGRSSSSSSG) are compositionally biased toward low complexity.

This is an uncharacterized protein from Saccharomyces cerevisiae (strain ATCC 204508 / S288c) (Baker's yeast).